We begin with the raw amino-acid sequence, 298 residues long: MLQQAIDRDPVDRIDRYPTRTAEPAPHIERLDPTVWGEVHSEQLSTFDRDGFSIMENLLSPEEVSEFRAEVERLAADKSLLDDERVIREKTSNRVRSVFEVHKLSAAVADLVRQTRIVGLARQVLGSDVYLHQTRINYMPGFRGTGFYWHSDFETWHAEDGMPAPRAVSLSIALTDNYPFNGSLMVMPGSHRTFVPCVGATPADHYRESLREQEIGVPSTEDITVLAQRYGITQFTGRAGSALLFDSNVMHGSANNITPFPRSNIFLVFNSVENTLVEPFAAPAPRPTYIGSRDFTPL.

Over residues 1 to 18 the composition is skewed to basic and acidic residues; the sequence is MLQQAIDRDPVDRIDRYP. A disordered region spans residues 1–26; sequence MLQQAIDRDPVDRIDRYPTRTAEPAP. Residue Gln-133 coordinates L-ectoine. His-150, Asp-152, and His-251 together coordinate Fe cation.

Belongs to the PhyH family. EctD subfamily. In terms of assembly, homodimer. It depends on Fe(2+) as a cofactor.

It catalyses the reaction L-ectoine + 2-oxoglutarate + O2 = 5-hydroxyectoine + succinate + CO2. Involved in the biosynthesis of 5-hydroxyectoine, called compatible solute, which helps organisms to survive extreme osmotic stress by acting as a highly soluble organic osmolyte. Catalyzes the 2-oxoglutarate-dependent selective hydroxylation of L-ectoine to yield (4S,5S)-5-hydroxyectoine. This Nocardia farcinica (strain IFM 10152) protein is Ectoine dioxygenase.